The chain runs to 185 residues: Protein GrpE (185 aa).

Residues 1–40 (MSEEKKDEILEQETVETKEEIKTEEAEQKTESLEEKVARL) form a disordered region.

Belongs to the GrpE family. In terms of assembly, homodimer.

The protein resides in the cytoplasm. In terms of biological role, participates actively in the response to hyperosmotic and heat shock by preventing the aggregation of stress-denatured proteins, in association with DnaK and GrpE. It is the nucleotide exchange factor for DnaK and may function as a thermosensor. Unfolded proteins bind initially to DnaJ; upon interaction with the DnaJ-bound protein, DnaK hydrolyzes its bound ATP, resulting in the formation of a stable complex. GrpE releases ADP from DnaK; ATP binding to DnaK triggers the release of the substrate protein, thus completing the reaction cycle. Several rounds of ATP-dependent interactions between DnaJ, DnaK and GrpE are required for fully efficient folding. In Aliarcobacter butzleri (strain RM4018) (Arcobacter butzleri), this protein is Protein GrpE.